Reading from the N-terminus, the 123-residue chain is Translation initiation factor 1A (123 aa).

The span at 1–11 (MSPDKTEDEDK) shows a compositional bias: acidic residues. Residues 1–26 (MSPDKTEDEDKDVNVDQDQFNEEEES) form a disordered region. The S1-like domain maps to 28–102 (GRVILPNKKK…EKADVVYRYT (75 aa)).

The protein belongs to the eIF-1A family.

In terms of biological role, seems to be required for maximal rate of protein biosynthesis. Enhances ribosome dissociation into subunits and stabilizes the binding of the initiator Met-tRNA(I) to 40 S ribosomal subunits. This Thermoplasma volcanium (strain ATCC 51530 / DSM 4299 / JCM 9571 / NBRC 15438 / GSS1) protein is Translation initiation factor 1A (eIF1A).